Consider the following 196-residue polypeptide: Peroxiredoxin TSA1 (196 aa).

Residues 3 to 161 (AQVQKQAPTF…ALRLVEAFQW (159 aa)) form the Thioredoxin domain. A Glycyl lysine isopeptide (Lys-Gly) (interchain with G-Cter in ubiquitin) cross-link involves residue K14. 45–47 (TFV) provides a ligand contact to substrate. C48 functions as the Cysteine sulfenic acid (-SOH) intermediate in the catalytic mechanism. Residue K89 forms a Glycyl lysine isopeptide (Lys-Gly) (interchain with G-Cter in ubiquitin) linkage. R124 is a binding site for substrate. Residue K132 forms a Glycyl lysine isopeptide (Lys-Gly) (interchain with G-Cter in ubiquitin) linkage. A Phosphothreonine modification is found at T174.

The protein belongs to the peroxiredoxin family. AhpC/Prx1 subfamily. As to quaternary structure, homodimer; disulfide-linked, upon oxidation. Interacts with YAP1 via transient disulfide linkages. In terms of processing, the enzyme can be inactivated by further oxidation of the cysteine sulfenic acid (C(P)-SOH) to sulphinic acid (C(P)-SO2H) instead of its condensation to a disulfide bond. It can be reactivated by forming a transient disulfide bond with sulfiredoxin SRX1, which reduces the cysteine sulfinic acid in an ATP- and Mg-dependent manner.

The protein localises to the cytoplasm. The enzyme catalyses a hydroperoxide + [thioredoxin]-dithiol = an alcohol + [thioredoxin]-disulfide + H2O. In terms of biological role, thiol-specific peroxidase that catalyzes the reduction of hydrogen peroxide and organic hydroperoxides to water and alcohols, respectively. Plays a role in cell protection against oxidative stress by detoxifying peroxides and as sensor of hydrogen peroxide-mediated signaling events. Protects the cell against the oxidative stress caused by nascent-protein misfolding and aggregation. Relays hydrogen peroxide as a signal to the transcription factor YAP1 by inducing the formation of intramolecular disulfide bonds in YAP1, which causes its nuclear accumulation and activation. Can act alternatively as peroxidase and molecular chaperone. Oxidative stress and heat shock exposure cause a reversible shift of the protein structure from low MW species to high MW complexes, triggering a peroxidase-to-chaperone functional switch. The chaperone function of the protein enhances resistance to heat shock. This chain is Peroxiredoxin TSA1, found in Saccharomyces cerevisiae (strain ATCC 204508 / S288c) (Baker's yeast).